The primary structure comprises 311 residues: MKNLSVVTQFILLGIPHTEGVETMLFVLFFSFYIFTLVGNLLILLAIVSSSRLHTPMYFFLCQLSVCDIFFPSVSSPKMLFYLSGNTPAISYAGCVSQLFFYHFLGGTECFLYTVMAYDRFVAICYPLRYSVIMSHRICAFLAMGTAVFGCIHSTFLTTLTFQLPYCGPKDVNYYFCDIPVVMKLACADTSTLEMVGFISVGLMPLSCFFFILTSYSCIVRSILQIRSTEGRHRAFSTCSAHFTAILLFYMPVIFIYLRPTPSPWLDATVQILNNLVTPMLNPLIYSLRNKEVKSSLWTVLHLLCFLPKHL.

At 1-24 the chain is on the extracellular side; that stretch reads MKNLSVVTQFILLGIPHTEGVETM. The chain crosses the membrane as a helical span at residues 25–45; it reads LFVLFFSFYIFTLVGNLLILL. Residues 46-54 lie on the Cytoplasmic side of the membrane; the sequence is AIVSSSRLH. The chain crosses the membrane as a helical span at residues 55–75; the sequence is TPMYFFLCQLSVCDIFFPSVS. The Extracellular portion of the chain corresponds to 76-95; it reads SPKMLFYLSGNTPAISYAGC. Cysteines 95 and 187 form a disulfide. The helical transmembrane segment at 96-116 threads the bilayer; the sequence is VSQLFFYHFLGGTECFLYTVM. The Cytoplasmic segment spans residues 117 to 137; it reads AYDRFVAICYPLRYSVIMSHR. A helical transmembrane segment spans residues 138 to 158; sequence ICAFLAMGTAVFGCIHSTFLT. Residues 159–192 are Extracellular-facing; it reads TLTFQLPYCGPKDVNYYFCDIPVVMKLACADTST. Residues 193–213 traverse the membrane as a helical segment; sequence LEMVGFISVGLMPLSCFFFIL. Topologically, residues 214–237 are cytoplasmic; that stretch reads TSYSCIVRSILQIRSTEGRHRAFS. Residues 238 to 258 traverse the membrane as a helical segment; it reads TCSAHFTAILLFYMPVIFIYL. The Extracellular segment spans residues 259 to 271; the sequence is RPTPSPWLDATVQ. A helical membrane pass occupies residues 272–288; the sequence is ILNNLVTPMLNPLIYSL. Topologically, residues 289–311 are cytoplasmic; the sequence is RNKEVKSSLWTVLHLLCFLPKHL.

This sequence belongs to the G-protein coupled receptor 1 family.

Its subcellular location is the cell membrane. In terms of biological role, odorant receptor. The polypeptide is Olfactory receptor 10D1B (Mus musculus (Mouse)).